The primary structure comprises 617 residues: Dihydroxy-acid dehydratase (617 aa).

Aspartate 81 lines the Mg(2+) pocket. Position 122 (cysteine 122) interacts with [2Fe-2S] cluster. Residues aspartate 123 and lysine 124 each coordinate Mg(2+). N6-carboxylysine is present on lysine 124. Cysteine 195 lines the [2Fe-2S] cluster pocket. Glutamate 491 contributes to the Mg(2+) binding site. The active-site Proton acceptor is the serine 517.

This sequence belongs to the IlvD/Edd family. In terms of assembly, homodimer. [2Fe-2S] cluster serves as cofactor. Requires Mg(2+) as cofactor.

The catalysed reaction is (2R)-2,3-dihydroxy-3-methylbutanoate = 3-methyl-2-oxobutanoate + H2O. The enzyme catalyses (2R,3R)-2,3-dihydroxy-3-methylpentanoate = (S)-3-methyl-2-oxopentanoate + H2O. Its pathway is amino-acid biosynthesis; L-isoleucine biosynthesis; L-isoleucine from 2-oxobutanoate: step 3/4. It functions in the pathway amino-acid biosynthesis; L-valine biosynthesis; L-valine from pyruvate: step 3/4. In terms of biological role, functions in the biosynthesis of branched-chain amino acids. Catalyzes the dehydration of (2R,3R)-2,3-dihydroxy-3-methylpentanoate (2,3-dihydroxy-3-methylvalerate) into 2-oxo-3-methylpentanoate (2-oxo-3-methylvalerate) and of (2R)-2,3-dihydroxy-3-methylbutanoate (2,3-dihydroxyisovalerate) into 2-oxo-3-methylbutanoate (2-oxoisovalerate), the penultimate precursor to L-isoleucine and L-valine, respectively. The protein is Dihydroxy-acid dehydratase of Hydrogenovibrio crunogenus (strain DSM 25203 / XCL-2) (Thiomicrospira crunogena).